Consider the following 416-residue polypeptide: Serine hydroxymethyltransferase (416 aa).

Residues Leu-121 and 125–127 (GHL) each bind (6S)-5,6,7,8-tetrahydrofolate. N6-(pyridoxal phosphate)lysine is present on Lys-230. Residue 355–357 (SPF) coordinates (6S)-5,6,7,8-tetrahydrofolate.

Belongs to the SHMT family. As to quaternary structure, homodimer. Pyridoxal 5'-phosphate serves as cofactor.

Its subcellular location is the cytoplasm. It carries out the reaction (6R)-5,10-methylene-5,6,7,8-tetrahydrofolate + glycine + H2O = (6S)-5,6,7,8-tetrahydrofolate + L-serine. The protein operates within one-carbon metabolism; tetrahydrofolate interconversion. Its pathway is amino-acid biosynthesis; glycine biosynthesis; glycine from L-serine: step 1/1. Its function is as follows. Catalyzes the reversible interconversion of serine and glycine with tetrahydrofolate (THF) serving as the one-carbon carrier. This reaction serves as the major source of one-carbon groups required for the biosynthesis of purines, thymidylate, methionine, and other important biomolecules. Also exhibits THF-independent aldolase activity toward beta-hydroxyamino acids, producing glycine and aldehydes, via a retro-aldol mechanism. This Streptococcus thermophilus (strain ATCC BAA-250 / LMG 18311) protein is Serine hydroxymethyltransferase.